The primary structure comprises 461 residues: ATP-dependent protease ATPase subunit HslU (461 aa).

ATP-binding positions include valine 21, glycine 63–glutamate 68, aspartate 274, glutamate 339, and arginine 411.

Belongs to the ClpX chaperone family. HslU subfamily. In terms of assembly, a double ring-shaped homohexamer of HslV is capped on each side by a ring-shaped HslU homohexamer. The assembly of the HslU/HslV complex is dependent on binding of ATP.

It localises to the cytoplasm. Functionally, ATPase subunit of a proteasome-like degradation complex; this subunit has chaperone activity. The binding of ATP and its subsequent hydrolysis by HslU are essential for unfolding of protein substrates subsequently hydrolyzed by HslV. HslU recognizes the N-terminal part of its protein substrates and unfolds these before they are guided to HslV for hydrolysis. This Caldanaerobacter subterraneus subsp. tengcongensis (strain DSM 15242 / JCM 11007 / NBRC 100824 / MB4) (Thermoanaerobacter tengcongensis) protein is ATP-dependent protease ATPase subunit HslU.